The sequence spans 359 residues: MTSTSKGILRPFLIVCVILACFMACLLIYIKPTNSWVFSPMESASSVLKMKNFFSTKTDYFNETTILVWVWPFGQTFDLTSCQAMFNIQGCHLTTDRSLYNKSHAVLIHHRDISWDLTNLPQQARPPFQKWIWMNLESPTHTPQKSGIEHLFNLTLTYRRDSDIQVPYGFLTVSTNPFVFEVPSKEKLVCWVVSNWNPEHARVKYYNELSKSIEIHTYGQAFGEYVNEKNLIPTISTCKFYLSFENSIHKDYITEKLYNAFLAGSVPVVLGPSRENYENYIPADSFIHVEDYNSPSELAKYLKEVDKNNKLYLSYFNWRKDFTVNLPRFWESHACLACDHVKRHQEYKSVGNLEKWFWN.

The Cytoplasmic portion of the chain corresponds to 1 to 11; it reads MTSTSKGILRP. Residues 12–32 form a helical; Signal-anchor for type II membrane protein membrane-spanning segment; that stretch reads FLIVCVILACFMACLLIYIKP. Residues 33–359 are Lumenal-facing; sequence TNSWVFSPME…VGNLEKWFWN (327 aa). N-linked (GlcNAc...) asparagine glycosylation occurs at Asn62. The segment at 63 to 168 is acceptor-binding; sequence ETTILVWVWP…RRDSDIQVPY (106 aa). Gln75 provides a ligand contact to a beta-D-galactosyl-(1-&gt;4)-N-acetyl-beta-D-glucosaminyl derivative. Intrachain disulfides connect Cys82-Cys335, Cys91-Cys338, and Cys190-Cys238. Asn101 carries an N-linked (GlcNAc...) asparagine glycan. Position 137 (Glu137) interacts with a beta-D-galactosyl-(1-&gt;4)-N-acetyl-beta-D-glucosaminyl derivative. Residue Glu137 is the Nucleophile of the active site. Residue Glu137 coordinates GDP-beta-L-fucose. Asn153 carries N-linked (GlcNAc...) asparagine glycosylation. Tyr168, Val192, Ser194, Asn195, Arg202, Val226, Tyr241, Asn246, Tyr252, Glu255, and Lys256 together coordinate GDP-beta-L-fucose. Positions 169 to 326 are donor-binding; it reads GFLTVSTNPF…NWRKDFTVNL (158 aa). The segment at 327–359 is acceptor-binding; that stretch reads PRFWESHACLACDHVKRHQEYKSVGNLEKWFWN.

The protein belongs to the glycosyltransferase 10 family. As to quaternary structure, homodimer. In terms of processing, N-glycosylated with complex-type N-glycans.

The protein localises to the golgi apparatus. Its subcellular location is the trans-Golgi network membrane. It localises to the golgi apparatus membrane. It catalyses the reaction a beta-D-galactosyl-(1-&gt;4)-N-acetyl-beta-D-glucosaminyl derivative + GDP-beta-L-fucose = a beta-D-galactosyl-(1-&gt;4)-[alpha-L-fucosyl-(1-&gt;3)]-N-acetyl-beta-D-glucosaminyl derivative + GDP + H(+). The enzyme catalyses an alpha-Neu5Ac-(2-&gt;3)-beta-D-Gal-(1-&gt;4)-beta-D-GlcNAc-(1-&gt;3)-beta-D-Gal-(1-&gt;4)-beta-D-GlcNAc derivative + GDP-beta-L-fucose = an alpha-Neu5Ac-(2-&gt;3)-beta-D-Gal-(1-&gt;4)-beta-D-GlcNAc-(1-&gt;3)-beta-D-Gal-(1-&gt;4)-[alpha-L-Fuc-(1-&gt;3)]-beta-D-GlcNAc derivative + GDP + H(+). The catalysed reaction is alpha-N-glycoloylneuraminosyl-(2-&gt;3)-beta-D-galactosyl-(1-&gt;4)-N-acetyl-beta-D-glucosaminyl-(1-&gt;3)-beta-D-galactosyl-(1-&gt;4)-N-acetyl-beta-D-glucosaminyl-(1-&gt;3)-beta-D-galactosyl-(1-&gt;4)-beta-D-glucosyl-(1&lt;-&gt;1')-ceramide + GDP-beta-L-fucose = alpha-N-glycoloylneuraminosyl-(2-&gt;3)-beta-D-galactosyl-(1-&gt;4)-N-acetyl-beta-D-glucosaminyl-(1-&gt;3)-beta-D-galactosyl-(1-&gt;4)-[alpha-L-fucosyl-(1-&gt;3)]-N-acetyl-beta-D-glucosaminyl-(1-&gt;3)-beta-D-galactosyl-(1-&gt;4)-beta-D-glucosyl-(1&lt;-&gt;1')-ceramide + GDP + H(+). It carries out the reaction alpha-D-galactosyl-(1-&gt;3)-beta-D-galactosyl-(1-&gt;4)-N-acetyl-beta-D-glucosaminyl-(1-&gt;3)-beta-D-galactosyl-(1-&gt;4)-beta-D-glucosyl-(1&lt;-&gt;1')-ceramide + GDP-beta-L-fucose = a neolactoside IV(3)-alpha-Gal,III(3)-alpha-Fuc-nLc4Cer + GDP + H(+). It catalyses the reaction a neolactoside nLc4Cer + GDP-beta-L-fucose = a neolactoside III(3)-alpha-Fuc-nLc4Cer + GDP + H(+). The enzyme catalyses an N-acetyl-alpha-neuraminyl-(2-&gt;3)-beta-D-galactosyl-(1-&gt;4)-N-acetyl-beta-D-glucosaminyl derivative + GDP-beta-L-fucose = an alpha-Neu5Ac-(2-&gt;3)-beta-D-Gal-(1-&gt;4)-[alpha-L-Fuc-(1-&gt;3)]-beta-D-GlcNAc derivative + GDP + H(+). The catalysed reaction is beta-D-Gal-(1-&gt;4)-beta-D-GlcNAc-(1-&gt;3)-beta-D-Gal-(1-&gt;4)-D-Glc + GDP-beta-L-fucose = beta-D-Gal-(1-&gt;4)-[alpha-L-Fuc-(1-&gt;3)]-beta-D-GlcNAc-(1-&gt;3)-beta-D-Gal-(1-&gt;4)-D-Glc + GDP + H(+). It carries out the reaction an alpha-L-Fuc-(1-&gt;2)-beta-D-Gal-(1-&gt;4)-beta-D-GlcNAc derivative + GDP-beta-L-fucose = an alpha-L-Fuc-(1-&gt;2)-beta-D-Gal-(1-&gt;4)-[alpha-L-Fuc-(1-&gt;3)]-beta-D-GlcNAc derivative + GDP + H(+). It functions in the pathway protein modification; protein glycosylation. Its pathway is glycolipid biosynthesis. Its activity is regulated as follows. Activated by Mn2+. In terms of biological role, catalyzes alpha(1-&gt;3) linkage of fucosyl moiety transferred from GDP-beta-L-fucose to N-acetyl glucosamine (GlcNAc) within type 2 lactosamine (LacNAc, beta-D-Gal-(1-&gt;4)-beta-D-GlcNAc-) glycan attached to glycolipids and N- or O-linked glycoproteins. Fucosylates distal type 2 LacNAc and its fucosylated (H-type 2 LacNAc) and sialylated (sialyl-type 2 LacNAc) derivatives to form Lewis x (Lex) (CD15) and Lewis y (Ley) antigenic epitopes involved in cell adhesion and differentiation. Generates Lex epitopes in the brain, presumably playing a role in the maintenance of neuronal stemness and neurite outgrowth in progenitor neural cells. Fucosylates the internal type 2 LacNAc unit of the polylactosamine chain to form VIM-2 antigen that serves as recognition epitope for SELE. Can also modify milk oligosaccharides in particular type 2 tetrasaccharide LNnT. The sequence is that of 4-galactosyl-N-acetylglucosaminide 3-alpha-L-fucosyltransferase 9 from Cricetulus griseus (Chinese hamster).